We begin with the raw amino-acid sequence, 182 residues long: ATP synthase subunit delta (182 aa).

It belongs to the ATPase delta chain family. F-type ATPases have 2 components, F(1) - the catalytic core - and F(0) - the membrane proton channel. F(1) has five subunits: alpha(3), beta(3), gamma(1), delta(1), epsilon(1). F(0) has three main subunits: a(1), b(2) and c(10-14). The alpha and beta chains form an alternating ring which encloses part of the gamma chain. F(1) is attached to F(0) by a central stalk formed by the gamma and epsilon chains, while a peripheral stalk is formed by the delta and b chains.

It is found in the cell inner membrane. Functionally, f(1)F(0) ATP synthase produces ATP from ADP in the presence of a proton or sodium gradient. F-type ATPases consist of two structural domains, F(1) containing the extramembraneous catalytic core and F(0) containing the membrane proton channel, linked together by a central stalk and a peripheral stalk. During catalysis, ATP synthesis in the catalytic domain of F(1) is coupled via a rotary mechanism of the central stalk subunits to proton translocation. This protein is part of the stalk that links CF(0) to CF(1). It either transmits conformational changes from CF(0) to CF(1) or is implicated in proton conduction. This is ATP synthase subunit delta from Hydrogenobaculum sp. (strain Y04AAS1).